A 674-amino-acid chain; its full sequence is Tripartite terminase subunit 3 (674 aa).

The Walker A motif signature appears at 212-219 (VPRRHGKT). Residues 305–310 (LLLVDE) carry the Walker B motif motif. Catalysis depends on Glu310, which acts as the For ATPase activity. Residues Asp463, Glu534, and Asp651 each act as for nuclease activity in the active site.

The protein belongs to the herpesviridae TRM3 protein family. Interacts with the terminase subunits TRM1 and TRM2. Interacts with portal protein.

The protein resides in the host nucleus. Its function is as follows. Component of the molecular motor that translocates viral genomic DNA in empty capsid during DNA packaging. Forms a tripartite terminase complex together with TRM1 and TRM2 in the host cytoplasm. Once the complex reaches the host nucleus, it interacts with the capsid portal vertex. This portal forms a ring in which genomic DNA is translocated into the capsid. TRM3 carries an RNase H-like nuclease activity that plays an important role for the cleavage of concatemeric viral DNA into unit length genomes. This chain is Tripartite terminase subunit 3, found in Homo sapiens (Human).